The primary structure comprises 837 residues: Protein ROD1 (837 aa).

A phosphoserine mark is found at serine 138 and serine 141. Residue lysine 401 forms a Glycyl lysine isopeptide (Lys-Gly) (interchain with G-Cter in ubiquitin) linkage. At serine 436 the chain carries Phosphoserine. Residues 487–490 (PPNY) carry the PY-motif motif. Serine 536 carries the phosphoserine modification. Residues 656–659 (PPAY) carry the PY-motif motif. 2 disordered regions span residues 675-726 (ERPQ…SVSL) and 763-837 (SFTS…RDRS). Positions 685–703 (TSSLLPLPGSSKSSNNLKR) are enriched in low complexity. Over residues 716-726 (PRNNSGSSVSL) the composition is skewed to polar residues. Residues serine 720 and serine 725 each carry the phosphoserine modification. Low complexity predominate over residues 763–773 (SFTSNSSSKNN). Residues 774–792 (SHFDKTDSTSDANKPREEE) are compositionally biased toward basic and acidic residues. The span at 805 to 815 (SSSVRSNNSNS) shows a compositional bias: low complexity.

The protein belongs to the arrestin family. In terms of assembly, interacts with RSP5 via its 2 PY-motifs.

The protein resides in the membrane. Mediates resistance to o-dinitrobenzene, calcium and zinc. The polypeptide is Protein ROD1 (ROD1) (Saccharomyces cerevisiae (strain ATCC 204508 / S288c) (Baker's yeast)).